The primary structure comprises 442 residues: Trigger factor (442 aa).

The region spanning 162-247 is the PPIase FKBP-type domain; it reads GDTVTIDYKG…IHEVKSKQLP (86 aa).

It belongs to the FKBP-type PPIase family. Tig subfamily.

The protein resides in the cytoplasm. The enzyme catalyses [protein]-peptidylproline (omega=180) = [protein]-peptidylproline (omega=0). In terms of biological role, involved in protein export. Acts as a chaperone by maintaining the newly synthesized protein in an open conformation. Functions as a peptidyl-prolyl cis-trans isomerase. This is Trigger factor from Lactobacillus acidophilus (strain ATCC 700396 / NCK56 / N2 / NCFM).